The primary structure comprises 388 residues: Purple acid phosphatase 19 (388 aa).

The signal sequence occupies residues 1-24 (MGLNHLTLVCSAIALLSIFVVSQA). N-linked (GlcNAc...) asparagine glycosylation is found at N97 and N111. 2 residues coordinate Fe cation: D145 and Y148. Residue D145 coordinates Zn(2+). N182 serves as a coordination point for Zn(2+). N182 serves as a coordination point for substrate. The N-linked (GlcNAc...) asparagine glycan is linked to N226. H238 contacts Zn(2+). H248 functions as the Proton donor in the catalytic mechanism. Residue H275 coordinates Zn(2+). 275-277 (HVH) is a binding site for substrate. H277 provides a ligand contact to Fe cation. N291 and N348 each carry an N-linked (GlcNAc...) asparagine glycan.

It belongs to the metallophosphoesterase superfamily. Purple acid phosphatase family. In terms of assembly, homodimer. Fe cation serves as cofactor. The cofactor is Zn(2+). Specifically expressed in flowers.

It is found in the secreted. The enzyme catalyses a phosphate monoester + H2O = an alcohol + phosphate. The chain is Purple acid phosphatase 19 (PAP19) from Arabidopsis thaliana (Mouse-ear cress).